The primary structure comprises 1649 residues: MALFRRFFYKKPPDRLLEISERVYVFDCCFSSDVMGEDEYKVYLGGIVAQLQDHFPEASFMVFNFREGEQRSQISDVLSQYDMTVMDYPRQYESCPLLPLEMIHHFLRSSESWLSLEGQQNVLLMHCERGGWPVLAFMLSGLLLYRKQYHGEQKTLEMVHKQAPKELLHLLSPLNPQPSQLRYLQYISRRNLGSDWPPSDTPLLLDCLILRDLPHFEGKKGCRPILRVYGQDPKARTNRSSILLFSTLKTKKHTRLYQQEECILVKLDIQCRVQGDVVLECIHLHDDLVSEEMVFRIMFHTAFVRANILMLQRDEMDILWDVKDQFPKEFKAEVLFSGADAVVPPITTSTLSDDENDFDMTSPEEFFEVEEIFSDVIDGPDHKRDSDSFVVVDTASDDSEGKEVWKGDVEPNAFLDCASDDSNHKHDMHAETSTDPVKDITVDDVQYRSDGKADSNIDSVKDIGIDDGDEQRKRRTVEAKENDSSTVQTQSKGDEESNDLESMSQKTNTSLNKPISEKPQATLRKQVGANAKPAAAGDSLKPKSKQQETQGPNVRMAKPNAVSRWIPSNKGSYKDSMHVAYPPTRINSAPASITTSLKDGKRATSPDGVIPKDAKTKYLRASVSSPDMRSRAPICSSPDSSPKETPSSLPPASPHQAPPPLPSLTSEAKTVLHSSQAVASPPPPPPPPPLPTYSHYQTSQLPPPPPPPPPFSSERPNSGTVLPPPPPPPPPFSSERPNSGTVLPPPPPPPLPFSSERPNSGTVLPPPPSPPWKSVYASALAIPAICSTSQAPTSSPTPPPPPPAYYSVGQKSSDLQTSQLPSPPPPPPPPPFASVRRNSETLLPPPPPPPPPPFASVRRNSETLLPPPPPPPPWKSLYASTFETHEACSTSSSPPPPPPPPPFSPLNTTKANDYILPPPPLPYTSIAPSPSVKILPLHGISSAPSPPVKTAPPPPPPPPFSNAHSVLSPPPPSYGSPPPPPPPPPSYGSPPPPPPPPPSYGSPPPPPPPPPGYGSPPPPPPPPPSYGSPPPPPPPPFSHVSSIPPPPPPPPMHGGAPPPPPPPPMHGGAPPPPPPPPMHGGAPPPPPPPPMHGGAPPPPPPPMFGGAQPPPPPPMRGGAPPPPPPPMRGGAPPPPPPPMRGGAPPPPPPPMHGGAPPPPPPPMRGGAPPPPPPPGGRGPGAPPPPPPPGGRAPGPPPPPGPRPPGGGPPPPPMLGARGAAVDPRGAGRGRGLPRPGFGSAAQKKSSLKPLHWVKVTRALQGSLWDELQRHGESQTPSEFDVSEIETLFSATVQKPADKSGSRRKSVGAKPEKVQLIDLRRANNTEIMLTKVKMPLPDMMAAVLAMDESVLDVDQIENLIKFCPTKEEMELLKNYTGDKTTLGKCEQYFLELMKVPRVEAKLRVFSFKFQFGTQITEFKKSLNAVNSACEEVRSSQKLKEIMKKILYLGNTLNQGTARGAAVGFKLDSLSKLSDTRAANSKMTLMHYLCKVLASKASVLLDFPKDLESLESASKIQLKSLAEEMQAIIKGLEKLNQELTASESDGPVSDVFRKTLGDFISVAETEVATVSSLYSVVGRNADALAHYFGEDPNRCPFEQVTATLLNFIRLFKKAHEENVKQAELEKKKALKEAEMEKAKGVNLTKKPVDDS.

A Phosphatase tensin-type domain is found at 1-194; that stretch reads MALFRRFFYK…QYISRRNLGS (194 aa). The active-site Phosphocysteine intermediate is Cys127. The 140-residue stretch at 200–339 folds into the C2 tensin-type domain; that stretch reads DTPLLLDCLI…FKAEVLFSGA (140 aa). Disordered regions lie at residues 416-774 and 787-1245; these read DCAS…PWKS and STSQ…QKKS. Basic and acidic residues predominate over residues 421–483; sequence DSNHKHDMHA…RRTVEAKEND (63 aa). Polar residues-rich tracts occupy residues 500-513 and 585-597; these read LESM…SLNK and RINS…TTSL. Positions 598-616 are enriched in basic and acidic residues; the sequence is KDGKRATSPDGVIPKDAKT. Residues 648 to 662 are compositionally biased toward pro residues; the sequence is SLPPASPHQAPPPLP. Residues 665–678 show a composition bias toward polar residues; it reads TSEAKTVLHSSQAV. 5 stretches are compositionally biased toward pro residues: residues 680–691, 701–711, 722–732, 743–752, and 795–804; these read SPPPPPPPPPLP, LPPPPPPPPPF, LPPPPPPPLP, and SPTPPPPPPA. The span at 809 to 820 shows a compositional bias: polar residues; the sequence is GQKSSDLQTSQL. Pro residues-rich tracts occupy residues 821-832, 843-854, and 865-874; these read PSPPPPPPPPPF, LPPPPPPPPPPF, and LPPPPPPPPW. A compositionally biased stretch (polar residues) spans 878 to 890; it reads YASTFETHEACST. 3 stretches are compositionally biased toward pro residues: residues 893–904, 944–960, and 968–1213; these read SPPPPPPPPPFS, PSPP…PPPF, and SPPP…PPPM. Positions 1237–1635 constitute an FH2 domain; that stretch reads FGSAAQKKSS…KALKEAEMEK (399 aa).

It belongs to the formin-like family. Class-II subfamily.

In Arabidopsis thaliana (Mouse-ear cress), this protein is Formin-like protein 20 (FH20).